Consider the following 491-residue polypeptide: Putative pentatricopeptide repeat-containing protein At1g02420 (491 aa).

PPR repeat units follow at residues 179 to 209 (DTAC…LKHQ), 210 to 244 (FQPD…GLKP), 245 to 279 (DVVT…EETP), 280 to 314 (DVIT…GCYP), 315 to 349 (DVAA…GLSP), 350 to 384 (NATT…ECLP), 385 to 419 (NTQS…GFGS), and 420 to 454 (YSLV…GHRP).

It belongs to the PPR family. P subfamily.

This chain is Putative pentatricopeptide repeat-containing protein At1g02420, found in Arabidopsis thaliana (Mouse-ear cress).